The chain runs to 365 residues: Transcription factor TCP2 (365 aa).

Positions 42 to 100 (GKDRHSKVLTSKGPRDRRVRLSVSTALQFYDLQDRLGYDQPSKAVEWLIKAAEDSISEL) constitute a TCP domain. Over residues 130-150 (KSACSSNSDTSKNSSGLSLSR) the composition is skewed to low complexity. Disordered regions lie at residues 130–202 (KSAC…SAPS) and 220–245 (QTHFPISTNSHPFSSISDHHHHHPHH). The R domain occupies 151–172 (SELRDKARERARERTAKETKER). Over residues 151-176 (SELRDKARERARERTAKETKERDHNH) the composition is skewed to basic and acidic residues. Residues 177–202 (TSFTDLLNSGSDPVNSNRQWMASAPS) are compositionally biased toward polar residues.

In terms of assembly, interacts with SPL. Interacts with CRY1. Expressed in cotyledons, particularly in the vascular region, in leaves, roots, buds, flowers and immature siliques.

The protein localises to the nucleus. Its function is as follows. Plays a pivotal role in the control of morphogenesis of shoot organs by negatively regulating the expression of boundary-specific genes such as CUC genes, probably through the induction of miRNA (e.g. miR164). Participates in ovule development. Promotes light-regulated transcription of CHS, CAB, HYH and HY5. Positively regulates photomorphogenesis (e.g. hypocotyl elongation inhibition and cotyledon opening in response to blue light). This chain is Transcription factor TCP2, found in Arabidopsis thaliana (Mouse-ear cress).